The sequence spans 58 residues: Small ribosomal subunit protein bS21 (58 aa).

Residues 39–58 form a disordered region; that stretch reads EKPSVKRKRKSEVARKRKKF. The span at 43–58 shows a compositional bias: basic residues; it reads VKRKRKSEVARKRKKF.

It belongs to the bacterial ribosomal protein bS21 family.

This is Small ribosomal subunit protein bS21 from Streptococcus pneumoniae (strain ATCC BAA-255 / R6).